The primary structure comprises 968 residues: Isoleucine--tRNA ligase (968 aa).

A 'HIGH' region motif is present at residues 68-78; it reads PYANGALHMGH. Glu582 is a binding site for L-isoleucyl-5'-AMP. The 'KMSKS' region signature appears at 623–627; that stretch reads KMSKS. Residue Lys626 participates in ATP binding. Cys936, Cys939, Cys956, and Cys959 together coordinate Zn(2+).

Belongs to the class-I aminoacyl-tRNA synthetase family. IleS type 1 subfamily. As to quaternary structure, monomer. It depends on Zn(2+) as a cofactor.

The protein localises to the cytoplasm. It carries out the reaction tRNA(Ile) + L-isoleucine + ATP = L-isoleucyl-tRNA(Ile) + AMP + diphosphate. Functionally, catalyzes the attachment of isoleucine to tRNA(Ile). As IleRS can inadvertently accommodate and process structurally similar amino acids such as valine, to avoid such errors it has two additional distinct tRNA(Ile)-dependent editing activities. One activity is designated as 'pretransfer' editing and involves the hydrolysis of activated Val-AMP. The other activity is designated 'posttransfer' editing and involves deacylation of mischarged Val-tRNA(Ile). This is Isoleucine--tRNA ligase from Prochlorococcus marinus (strain MIT 9312).